The sequence spans 235 residues: UPF0173 metal-dependent hydrolase mll0680 (235 aa).

It belongs to the UPF0173 family.

The protein is UPF0173 metal-dependent hydrolase mll0680 of Mesorhizobium japonicum (strain LMG 29417 / CECT 9101 / MAFF 303099) (Mesorhizobium loti (strain MAFF 303099)).